A 235-amino-acid polypeptide reads, in one-letter code: Ubiquinone biosynthesis O-methyltransferase (235 aa).

4 residues coordinate S-adenosyl-L-methionine: Arg36, Gly56, Asp77, and Met122.

It belongs to the methyltransferase superfamily. UbiG/COQ3 family.

The enzyme catalyses a 3-demethylubiquinol + S-adenosyl-L-methionine = a ubiquinol + S-adenosyl-L-homocysteine + H(+). The catalysed reaction is a 3-(all-trans-polyprenyl)benzene-1,2-diol + S-adenosyl-L-methionine = a 2-methoxy-6-(all-trans-polyprenyl)phenol + S-adenosyl-L-homocysteine + H(+). The protein operates within cofactor biosynthesis; ubiquinone biosynthesis. Functionally, O-methyltransferase that catalyzes the 2 O-methylation steps in the ubiquinone biosynthetic pathway. The sequence is that of Ubiquinone biosynthesis O-methyltransferase from Leptothrix cholodnii (strain ATCC 51168 / LMG 8142 / SP-6) (Leptothrix discophora (strain SP-6)).